Consider the following 559-residue polypeptide: Nuclear speckle splicing regulatory protein 1 (559 aa).

The interval 22-57 is disordered; it reads VLQKPSVFGNDSDDDDDETSVSESLQREAAKKQAMK. Phosphoserine occurs at positions 27 and 33. Acidic residues predominate over residues 32 to 41; the sequence is DSDDDDDETS. Residues 105 to 179 adopt a coiled-coil conformation; the sequence is IHNLLKAVEI…EARLDVTKQR (75 aa). Positions 107-171 are necessary for alternative splicing activity; it reads NLLKAVEIRK…RERRAAALEA (65 aa). A disordered region spans residues 195–534; it reads EEEVPTCSFR…AKRSNEETVT (340 aa). A compositionally biased stretch (basic and acidic residues) spans 204-219; the sequence is REARSEIKEEKSKGYS. Lys211 participates in a covalent cross-link: Glycyl lysine isopeptide (Lys-Gly) (interchain with G-Cter in SUMO2). Residues Ser249, Ser255, and Ser256 each carry the phosphoserine modification. Positions 251–274 are enriched in basic and acidic residues; the sequence is FDAKSSENDEMEGDKGNCRREKGT. Thr276 carries the phosphothreonine modification. Residue Lys282 forms a Glycyl lysine isopeptide (Lys-Gly) (interchain with G-Cter in SUMO2) linkage. Composition is skewed to basic and acidic residues over residues 314–343, 351–488, and 502–521; these read EKRE…EKRD, SHRD…RNPE, and RITE…HETV. Residues 379–428 adopt a coiled-coil conformation; it reads KREKDREKYPSREQERHRQRNNYDRHNEKGCEKEEKSKEKEEHVKARKER. Ser458 is modified (phosphoserine).

Belongs to the NSRP1 family. As to quaternary structure, interacts (via C-terminus) with SRSF1. Interacts (via C-terminus) with SRSF2.

Its subcellular location is the nucleus. The protein resides in the nucleus speckle. Functionally, RNA-binding protein that mediates pre-mRNA alternative splicing regulation. The polypeptide is Nuclear speckle splicing regulatory protein 1 (NSRP1) (Bos taurus (Bovine)).